The sequence spans 139 residues: Large ribosomal subunit protein uL22 (139 aa).

The interval 1 to 21 (MTAPEQTYRNKKQRKQQHKLR) is disordered. Positions 9–21 (RNKKQRKQQHKLR) are enriched in basic residues.

Belongs to the universal ribosomal protein uL22 family. As to quaternary structure, part of the 50S ribosomal subunit.

Its function is as follows. This protein binds specifically to 23S rRNA; its binding is stimulated by other ribosomal proteins, e.g. L4, L17, and L20. It is important during the early stages of 50S assembly. It makes multiple contacts with different domains of the 23S rRNA in the assembled 50S subunit and ribosome. In terms of biological role, the globular domain of the protein is located near the polypeptide exit tunnel on the outside of the subunit, while an extended beta-hairpin is found that lines the wall of the exit tunnel in the center of the 70S ribosome. This Deinococcus geothermalis (strain DSM 11300 / CIP 105573 / AG-3a) protein is Large ribosomal subunit protein uL22.